The sequence spans 266 residues: Type 1 encapsulin shell protein (266 aa).

Belongs to the encapsulin family. Family 1 subfamily. In terms of assembly, homomultimeric. This encapsulin nanocompartment is formed by 60 subunits, and encloses one Dyp homohexamer; partially assembled 58-subunit compartments with and without cargo are also purified. May assemble the shell from dimers. Monomers form pentamers, which assemble to form hollow shells with pores 5-8 Angstroms in diameter where 3 pentamers meet.

Its subcellular location is the encapsulin nanocompartment. Its function is as follows. Shell component of a type 1 encapsulin nanocompartment. Assembles into proteinaceous shells 23-24 nm in diameter with 2-2.5 nm thick walls. Endogenous cargo protein DyP (dye-decolorizing peroxidase) is targeted to the interior via its C-terminal extension; only 1 DyP hexamer is incorporated into each shell. Empty shells can be isolated in the absence of cargo. Cargo encapsulation probably precedes assembly of the nanocompartment; may assemble or disassemble via dimers, subcomplexes with a distinct preference for even numbers of subunits are detected. Nanocompartments are stable against mechanical forces; loaded nanocompartments are less stable than empty ones. Nanocompartments are stable between pH 5-10; they aggregate at pH 9-10 and start to disassemble at pH 11. They are stable in 1M NaCl, 1 M MgCl(2) and 1M CaCl(2), unstable in 20% DMSO (dimethylsulfoxide) and are stable in 20% but not 40% ethanol. In Brevibacterium linens, this protein is Type 1 encapsulin shell protein.